The following is a 324-amino-acid chain: ATP-dependent 6-phosphofructokinase (324 aa).

Position 11 (Gly-11) interacts with ATP. ADP is bound at residue 21 to 25; the sequence is RAVVR. ATP is bound by residues 72–73 and 102–105; these read RE and GNGS. Asn-103 lines the Mg(2+) pocket. Residue 126-128 coordinates substrate; the sequence is TID. Asp-128 (proton acceptor) is an active-site residue. Lys-155 contributes to the ADP binding site. Substrate contacts are provided by residues Arg-163 and 170-172; that span reads MGR. Residues 186 to 188 and 214 to 216 contribute to the ADP site; these read GAE and KNF. Substrate-binding positions include Glu-223, Arg-248, and 254 to 257; that span reads YIQR.

It belongs to the phosphofructokinase type A (PFKA) family. ATP-dependent PFK group I subfamily. Prokaryotic clade 'B1' sub-subfamily. As to quaternary structure, homotetramer. Mg(2+) serves as cofactor.

It is found in the cytoplasm. It catalyses the reaction beta-D-fructose 6-phosphate + ATP = beta-D-fructose 1,6-bisphosphate + ADP + H(+). Its pathway is carbohydrate degradation; glycolysis; D-glyceraldehyde 3-phosphate and glycerone phosphate from D-glucose: step 3/4. Its activity is regulated as follows. Allosterically activated by ADP and other diphosphonucleosides, and allosterically inhibited by phosphoenolpyruvate. Functionally, catalyzes the phosphorylation of D-fructose 6-phosphate to fructose 1,6-bisphosphate by ATP, the first committing step of glycolysis. The protein is ATP-dependent 6-phosphofructokinase of Sulfurihydrogenibium sp. (strain YO3AOP1).